The chain runs to 141 residues: HTH-type transcriptional repressor NsrR (141 aa).

Positions 2-129 (QLTSFTDYGL…DSHTLADMVE (128 aa)) constitute an HTH rrf2-type domain. Residues 28–51 (ISEVTEVYGVSRNHMVKIINQLSR) constitute a DNA-binding region (H-T-H motif). [2Fe-2S] cluster contacts are provided by Cys91, Cys96, and Cys102.

[2Fe-2S] cluster serves as cofactor.

Nitric oxide-sensitive repressor of genes involved in protecting the cell against nitrosative stress. May require iron for activity. This Serratia proteamaculans (strain 568) protein is HTH-type transcriptional repressor NsrR.